The sequence spans 402 residues: Acyl-[acyl-carrier-protein] desaturase 3, chloroplastic (402 aa).

Disordered stretches follow at residues 1-25 (MSLTGCLPPRPPCSMRRRTSGGGAS) and 38-66 (VGGIGNPTPRGKKPFAPWREVPPQVTHTL). The N-terminal 32 residues, 1 to 32 (MSLTGCLPPRPPCSMRRRTSGGGASVSPVVVM), are a transit peptide targeting the chloroplast. Fe cation is bound by residues glutamate 139, glutamate 178, histidine 181, glutamate 231, glutamate 264, and histidine 267.

The protein belongs to the fatty acid desaturase type 2 family. In terms of assembly, homodimer. Fe(2+) serves as cofactor.

The protein localises to the plastid. It is found in the chloroplast. It functions in the pathway lipid metabolism; fatty acid metabolism. Functionally, introduces a cis double bond in the acyl chain of an acyl-[acyl-carrier protein]. In Oryza sativa subsp. indica (Rice), this protein is Acyl-[acyl-carrier-protein] desaturase 3, chloroplastic.